The sequence spans 269 residues: Formamidopyrimidine-DNA glycosylase (269 aa).

The Schiff-base intermediate with DNA role is filled by Pro2. Glu3 serves as the catalytic Proton donor. Catalysis depends on Lys57, which acts as the Proton donor; for beta-elimination activity. The DNA site is built by His90, Arg109, and Lys150. The segment at 235 to 269 (QVYGRKGEPCRVCGTPIVATKHAQRATFYCRHCQK) adopts an FPG-type zinc-finger fold. The active-site Proton donor; for delta-elimination activity is Arg259.

It belongs to the FPG family. Monomer. The cofactor is Zn(2+).

The enzyme catalyses Hydrolysis of DNA containing ring-opened 7-methylguanine residues, releasing 2,6-diamino-4-hydroxy-5-(N-methyl)formamidopyrimidine.. The catalysed reaction is 2'-deoxyribonucleotide-(2'-deoxyribose 5'-phosphate)-2'-deoxyribonucleotide-DNA = a 3'-end 2'-deoxyribonucleotide-(2,3-dehydro-2,3-deoxyribose 5'-phosphate)-DNA + a 5'-end 5'-phospho-2'-deoxyribonucleoside-DNA + H(+). Its function is as follows. Involved in base excision repair of DNA damaged by oxidation or by mutagenic agents. Acts as a DNA glycosylase that recognizes and removes damaged bases. Has a preference for oxidized purines, such as 7,8-dihydro-8-oxoguanine (8-oxoG). Has AP (apurinic/apyrimidinic) lyase activity and introduces nicks in the DNA strand. Cleaves the DNA backbone by beta-delta elimination to generate a single-strand break at the site of the removed base with both 3'- and 5'-phosphates. This Salmonella paratyphi C (strain RKS4594) protein is Formamidopyrimidine-DNA glycosylase.